The sequence spans 483 residues: Linamarin synthase 1 (483 aa).

The active-site Proton acceptor is His22. Position 22 (His22) interacts with an anthocyanidin. Asp124 acts as the Charge relay in catalysis. UDP-alpha-D-glucose is bound by residues Thr146, Val360, Gln362, His377, Trp380, Asn381, Ser382, and Glu385. An anthocyanidin is bound at residue Ala400. Glu401 and Gln402 together coordinate UDP-alpha-D-glucose.

This sequence belongs to the UDP-glycosyltransferase family. Expressed in the cortex, xylem and phloem parenchyma, and in specific cells in the endodermis of the petiole of the first unfolded leaf.

It catalyses the reaction 2-hydroxy-2-methylpropanenitrile + UDP-alpha-D-glucose = linamarin + UDP + H(+). UDP-glucosyltransferase catalyzing in planta synthesis of cyanogenic glucosides. Able to glucosylate acetone cyanohydrin and 2-hydroxy-2-methylbutyronitrile, forming linamarin and lotaustralin. Also accepts, to some extent, a wide range of potential acceptor substrates, including simple alcohols, flavonoids, isoflavonoids and other hydroxynitriles such as p-hydroxymandelonitrile, mandelonitrile, (E)-4-hydroxy-2-methylbut-2-enenitrile and (E)- 2-(hydroxymethyl)but-2-enenitrile. The polypeptide is Linamarin synthase 1 (Manihot esculenta (Cassava)).